The sequence spans 270 residues: Orotidine 5'-phosphate decarboxylase (270 aa).

Lys-89 serves as the catalytic Proton donor.

This sequence belongs to the OMP decarboxylase family. Type 2 subfamily.

It carries out the reaction orotidine 5'-phosphate + H(+) = UMP + CO2. It functions in the pathway pyrimidine metabolism; UMP biosynthesis via de novo pathway; UMP from orotate: step 2/2. This Dehalococcoides mccartyi (strain ATCC BAA-2100 / JCM 16839 / KCTC 5957 / BAV1) protein is Orotidine 5'-phosphate decarboxylase.